The chain runs to 795 residues: Phenylalanine--tRNA ligase beta subunit (795 aa).

Residues 39–148 (AGTFNGVVVG…LDAPIGTDLR (110 aa)) form the tRNA-binding domain. The B5 domain maps to 401–476 (PKVNTVQLRR…RIYGYNSIPN (76 aa)). Aspartate 454, aspartate 460, glutamate 463, and glutamate 464 together coordinate Mg(2+). Positions 701–794 (SKFPANRRDL…VKQRFNAELR (94 aa)) constitute an FDX-ACB domain.

The protein belongs to the phenylalanyl-tRNA synthetase beta subunit family. Type 1 subfamily. In terms of assembly, tetramer of two alpha and two beta subunits. Mg(2+) serves as cofactor.

Its subcellular location is the cytoplasm. The enzyme catalyses tRNA(Phe) + L-phenylalanine + ATP = L-phenylalanyl-tRNA(Phe) + AMP + diphosphate + H(+). This chain is Phenylalanine--tRNA ligase beta subunit (pheT), found in Haemophilus influenzae (strain ATCC 51907 / DSM 11121 / KW20 / Rd).